Consider the following 1102-residue polypeptide: MFAEDILRDYGSFISEHDGKLKLLRDKVPNRDVSESAQCVYMSPVVEVNFMGNDSMAPDRSFEESELVANKPLTTLANLCNQCRNLSRKAKRFQLAFLFSDFRLDDTLPPHTHTSEGSAGLEGSLVRMSSSMDFFCQVYFLLNRMIVILQNLWRQIAASVSVPMDINEVHIFAVFDAMSELLEHIVVFNELANQSKISTMWALYKKWLMNLSNSQSANLELNGLSTSLMDIENLITKDFFRILLDNLMELKKQFGLNSVSPITQHSNAYIRRQLLDVDANPSNELKNYEDPKHIIRLTTFVVVVHELGIQMEGKLVKNVIDLVARHKQVPLNRSVFWSPSGFLSLHAKTLMKSSARSQDGQGPKVHSTVLEKFRLSDQRTCRQLGVQLSLWSIQMQRVFDVGVFGHLKTFLQLILNGHSYADQVNLLAVALINRHVALMTPMTRNDWIVVSRLLQYLKVIQKTFESNQINFVRFISSLIQWQKQKVIHLLHTTKKKIVVLKLLQRKINFLATIKLAEKSIMGFPSKQRLTFVNLALGEFLDNRLLPADNQKLIKSILHRVNSISDIMRNIGGQLNTSESSSLVYNHWFLDTSVLKEYTELQRNPYSLQNLVSVSHHLDKIMAMFRGSRCPKQSANDLIIEFLSNHLEFFLRVEALSHLFQSQDQPFQQSALDYRLCINAVAVENDGDYNIIKDHLENYFTATFYNLTTIAPHDWKSYEKMRHLANKVLQLQPIDDHLPNQIIDQGIDVLQIMRNIHTFASSYAYNMNLQVFVETNSRSKHLDIIGTRHVANSVQTHGTGIINTTVNFIYQFLRQKFYTFSTFLHDEQIKSRLLKELRFHTEHKHSKSYQSYPYERADSFLKKIRRLGCSSNGETYMDLFRKVITQVGNAVGYVRLLQAGSKNANFRNRSYKTRFDSNFSCGGSKVHEATEGSIREYEKSLGHMKECYSDSTNYFKLLLQGFQPFLCNPHNHHLRTFYLITPALIMNYIDYRVKQKLKIYKKDQTKISLFEDGFAIGLVYILNMLNQQTEFHELGWSQTITQHLNAERSKVRDILAGQQRTAPEQLDEKLHQTVAITERHVNAYEHEYNLLYATLSSSEIFFQ.

The protein belongs to the SWIP family. Component of the WASH complex.

It localises to the early endosome. Its function is as follows. Acts at least in part as component of the WASH complex which may regulate wash nucleation-promoting factor (NPF) activity and is required for its membrane targeting during endosomal sorting. During embryogenesis, not involved in the wash-dependent developmental migration of hemocytes anteriorly from the tail. The protein is WASH complex subunit 4 of Drosophila melanogaster (Fruit fly).